The following is a 368-amino-acid chain: E3 ubiquitin-protein ligase makorin (368 aa).

C3H1-type zinc fingers lie at residues 2–29 (STKR…HDWN) and 30–57 (DQPN…HVKV). The disordered stretch occupies residues 58–81 (SRNPTVAPPPSSSTTTRASSSLQP). Over residues 69–78 (SSTTTRASSS) the composition is skewed to low complexity. Residues 147–174 (PADLPICSFAAGGNCPYGEECPQMHGDL) form a C3H1-type 3 zinc finger. Residues 175–202 (CTTCGKMCLHPYRPDEREEHTKLCEKNH) are makorin-type Cys-His. The segment at 216-274 (CSVCLDRVLSKPTAAERKFGLLSECDHPFCISCIRNWRNNSPTSGMDVNSALRACPICR) adopts an RING-type zinc-finger fold. Residues 303 to 332 (KLKSIDCKYFDFGTGTCPFGSSCFYKHAYR) form a C3H1-type 4 zinc finger.

In terms of tissue distribution, expressed in primary roots and leaves. Detected in vascular bundle tissues.

The catalysed reaction is S-ubiquitinyl-[E2 ubiquitin-conjugating enzyme]-L-cysteine + [acceptor protein]-L-lysine = [E2 ubiquitin-conjugating enzyme]-L-cysteine + N(6)-ubiquitinyl-[acceptor protein]-L-lysine.. Its pathway is protein modification; protein ubiquitination. Functionally, E3 ubiquitin ligase catalyzing the covalent attachment of ubiquitin moieties onto substrate proteins. The sequence is that of E3 ubiquitin-protein ligase makorin (MKRN) from Oryza sativa subsp. japonica (Rice).